The chain runs to 582 residues: NudC domain-containing protein 1 (582 aa).

Ser-7 is modified (phosphoserine). A CS domain is found at 272-360 (KVEPLYYWQQ…NEGLMWPELV (89 aa)). Ser-387 carries the post-translational modification Phosphoserine.

The protein localises to the cytoplasm. It localises to the nucleus. The chain is NudC domain-containing protein 1 from Mus musculus (Mouse).